Reading from the N-terminus, the 104-residue chain is UPF0145 protein RD1_2695 (104 aa).

The protein belongs to the UPF0145 family.

This Roseobacter denitrificans (strain ATCC 33942 / OCh 114) (Erythrobacter sp. (strain OCh 114)) protein is UPF0145 protein RD1_2695.